The following is a 204-amino-acid chain: Urease accessory protein UreG (204 aa).

Residue 12-19 coordinates GTP; sequence GPVGSGKT.

The protein belongs to the SIMIBI class G3E GTPase family. UreG subfamily. In terms of assembly, homodimer. UreD, UreF and UreG form a complex that acts as a GTP-hydrolysis-dependent molecular chaperone, activating the urease apoprotein by helping to assemble the nickel containing metallocenter of UreC. The UreE protein probably delivers the nickel.

The protein resides in the cytoplasm. In terms of biological role, facilitates the functional incorporation of the urease nickel metallocenter. This process requires GTP hydrolysis, probably effectuated by UreG. The polypeptide is Urease accessory protein UreG (Streptococcus salivarius (strain 57.I)).